A 326-amino-acid polypeptide reads, in one-letter code: Probable cell division protein WhiA (326 aa).

A DNA-binding region (H-T-H motif) is located at residues 275–308 (SLDELGHHADPPMTKDAVAGRIRRLLAMADKKAV).

Belongs to the WhiA family.

Its function is as follows. Involved in cell division and chromosome segregation. This chain is Probable cell division protein WhiA, found in Clavibacter michiganensis subsp. michiganensis (strain NCPPB 382).